Reading from the N-terminus, the 331-residue chain is Tetraacyldisaccharide 4'-kinase (331 aa).

58-65 (TVGGSGKT) contacts ATP.

It belongs to the LpxK family.

It carries out the reaction a lipid A disaccharide + ATP = a lipid IVA + ADP + H(+). Its pathway is glycolipid biosynthesis; lipid IV(A) biosynthesis; lipid IV(A) from (3R)-3-hydroxytetradecanoyl-[acyl-carrier-protein] and UDP-N-acetyl-alpha-D-glucosamine: step 6/6. Transfers the gamma-phosphate of ATP to the 4'-position of a tetraacyldisaccharide 1-phosphate intermediate (termed DS-1-P) to form tetraacyldisaccharide 1,4'-bis-phosphate (lipid IVA). The polypeptide is Tetraacyldisaccharide 4'-kinase (Shewanella denitrificans (strain OS217 / ATCC BAA-1090 / DSM 15013)).